The following is a 289-amino-acid chain: Acetyl-coenzyme A carboxylase carboxyl transferase subunit beta (289 aa).

The CoA carboxyltransferase N-terminal domain occupies 28–289; the sequence is VMTKCPECKK…QGGEMAVWQS (262 aa). Residues Cys-32, Cys-35, Cys-51, and Cys-54 each coordinate Zn(2+). The C4-type zinc finger occupies 32–54; the sequence is CPECKKIMYTKELLKNLKVCVNC.

It belongs to the AccD/PCCB family. In terms of assembly, acetyl-CoA carboxylase is a heterohexamer composed of biotin carboxyl carrier protein (AccB), biotin carboxylase (AccC) and two subunits each of ACCase subunit alpha (AccA) and ACCase subunit beta (AccD). It depends on Zn(2+) as a cofactor.

The protein resides in the cytoplasm. The enzyme catalyses N(6)-carboxybiotinyl-L-lysyl-[protein] + acetyl-CoA = N(6)-biotinyl-L-lysyl-[protein] + malonyl-CoA. It functions in the pathway lipid metabolism; malonyl-CoA biosynthesis; malonyl-CoA from acetyl-CoA: step 1/1. Component of the acetyl coenzyme A carboxylase (ACC) complex. Biotin carboxylase (BC) catalyzes the carboxylation of biotin on its carrier protein (BCCP) and then the CO(2) group is transferred by the transcarboxylase to acetyl-CoA to form malonyl-CoA. In Bacillus cereus (strain ATCC 14579 / DSM 31 / CCUG 7414 / JCM 2152 / NBRC 15305 / NCIMB 9373 / NCTC 2599 / NRRL B-3711), this protein is Acetyl-coenzyme A carboxylase carboxyl transferase subunit beta.